A 947-amino-acid chain; its full sequence is Bifunctional glutamine synthetase adenylyltransferase/adenylyl-removing enzyme (947 aa).

Residues 1–440 (MTPLSSPLRQ…VFNELIGDDE (440 aa)) form an adenylyl removase region. The interval 450–947 (SEPWREVWQD…ASWRKWLVAV (498 aa)) is adenylyl transferase.

The protein belongs to the GlnE family. It depends on Mg(2+) as a cofactor.

It catalyses the reaction [glutamine synthetase]-O(4)-(5'-adenylyl)-L-tyrosine + phosphate = [glutamine synthetase]-L-tyrosine + ADP. The enzyme catalyses [glutamine synthetase]-L-tyrosine + ATP = [glutamine synthetase]-O(4)-(5'-adenylyl)-L-tyrosine + diphosphate. Functionally, involved in the regulation of glutamine synthetase GlnA, a key enzyme in the process to assimilate ammonia. When cellular nitrogen levels are high, the C-terminal adenylyl transferase (AT) inactivates GlnA by covalent transfer of an adenylyl group from ATP to specific tyrosine residue of GlnA, thus reducing its activity. Conversely, when nitrogen levels are low, the N-terminal adenylyl removase (AR) activates GlnA by removing the adenylyl group by phosphorolysis, increasing its activity. The regulatory region of GlnE binds the signal transduction protein PII (GlnB) which indicates the nitrogen status of the cell. This Salmonella arizonae (strain ATCC BAA-731 / CDC346-86 / RSK2980) protein is Bifunctional glutamine synthetase adenylyltransferase/adenylyl-removing enzyme.